Reading from the N-terminus, the 381-residue chain is Heterogeneous nuclear rnp K-like protein 2 (381 aa).

The disordered stretch occupies residues Met-1–Pro-34. The segment covering Thr-15–Ala-33 has biased composition (low complexity). KH domains lie at Thr-43–Ile-107, Ile-156–Ile-221, and Asn-258–Leu-326. A disordered region spans residues Leu-344–Ser-381. Ser-358, Ser-360, and Ser-362 each carry phosphoserine. Positions Pro-370–Ser-381 are enriched in basic and acidic residues.

Belongs to the HEK2 family. As to quaternary structure, binds RNA. In terms of processing, phosphorylated by the plasma membrane-Anchored casein kinase YCK1. Phosphorylation at its C-terminus reduces its RNA-binding capacity.

Its subcellular location is the cytoplasm. The protein localises to the P-body. It is found in the nucleus. It localises to the chromosome. The protein resides in the telomere. In terms of biological role, RNA-binding protein involved in the correct localization of transcripts in the cell. RNA localization is a widespread mechanism for achieving localized protein synthesis. Required for the asymmetric localization to the daughter cell nucleus of the ASH1 transcript, coding for a specific repressor of transcription. Overexpression inhibits translation of the ASH1 transcript. Involved in the stability of transcripts, like the MTL1 mRNA. Involved in structural and functional organization of telomeric chromatin and regulates silencing at the HMR locus. The protein is Heterogeneous nuclear rnp K-like protein 2 (HEK2) of Saccharomyces cerevisiae (strain YJM789) (Baker's yeast).